Consider the following 345-residue polypeptide: S-adenosylmethionine:tRNA ribosyltransferase-isomerase (345 aa).

This sequence belongs to the QueA family. As to quaternary structure, monomer.

It localises to the cytoplasm. It carries out the reaction 7-aminomethyl-7-carbaguanosine(34) in tRNA + S-adenosyl-L-methionine = epoxyqueuosine(34) in tRNA + adenine + L-methionine + 2 H(+). It participates in tRNA modification; tRNA-queuosine biosynthesis. Its function is as follows. Transfers and isomerizes the ribose moiety from AdoMet to the 7-aminomethyl group of 7-deazaguanine (preQ1-tRNA) to give epoxyqueuosine (oQ-tRNA). This chain is S-adenosylmethionine:tRNA ribosyltransferase-isomerase, found in Shewanella oneidensis (strain ATCC 700550 / JCM 31522 / CIP 106686 / LMG 19005 / NCIMB 14063 / MR-1).